The primary structure comprises 103 residues: Co-chaperonin GroES (103 aa).

Belongs to the GroES chaperonin family. In terms of assembly, heptamer of 7 subunits arranged in a ring. Interacts with the chaperonin GroEL.

The protein resides in the cytoplasm. Together with the chaperonin GroEL, plays an essential role in assisting protein folding. The GroEL-GroES system forms a nano-cage that allows encapsulation of the non-native substrate proteins and provides a physical environment optimized to promote and accelerate protein folding. GroES binds to the apical surface of the GroEL ring, thereby capping the opening of the GroEL channel. The sequence is that of Co-chaperonin GroES from Rippkaea orientalis (strain PCC 8801 / RF-1) (Cyanothece sp. (strain PCC 8801)).